Here is a 96-residue protein sequence, read N- to C-terminus: UPF0235 protein ECA3630 (96 aa).

Belongs to the UPF0235 family.

The polypeptide is UPF0235 protein ECA3630 (Pectobacterium atrosepticum (strain SCRI 1043 / ATCC BAA-672) (Erwinia carotovora subsp. atroseptica)).